A 210-amino-acid chain; its full sequence is LexA repressor (210 aa).

Positions 30–50 form a DNA-binding region, H-T-H motif; it reads RVEIAREIGFKSPNAAEEHLK. Residues serine 127 and lysine 164 each act as for autocatalytic cleavage activity in the active site.

This sequence belongs to the peptidase S24 family. In terms of assembly, homodimer.

The catalysed reaction is Hydrolysis of Ala-|-Gly bond in repressor LexA.. Represses a number of genes involved in the response to DNA damage (SOS response), including recA and lexA. In the presence of single-stranded DNA, RecA interacts with LexA causing an autocatalytic cleavage which disrupts the DNA-binding part of LexA, leading to derepression of the SOS regulon and eventually DNA repair. The chain is LexA repressor from Actinobacillus pleuropneumoniae serotype 7 (strain AP76).